Here is a 170-residue protein sequence, read N- to C-terminus: Ureidoglycolate lyase (170 aa).

This sequence belongs to the ureidoglycolate lyase family. In terms of assembly, homodimer. Ni(2+) serves as cofactor.

The catalysed reaction is (S)-ureidoglycolate = urea + glyoxylate. It functions in the pathway nitrogen metabolism; (S)-allantoin degradation. Catalyzes the catabolism of the allantoin degradation intermediate (S)-ureidoglycolate, generating urea and glyoxylate. Involved in the utilization of allantoin as nitrogen source. In Stutzerimonas stutzeri (strain A1501) (Pseudomonas stutzeri), this protein is Ureidoglycolate lyase.